Consider the following 243-residue polypeptide: tRNA pseudouridine synthase A (243 aa).

The active-site Nucleophile is the Asp-51. A substrate-binding site is contributed by Tyr-111.

The protein belongs to the tRNA pseudouridine synthase TruA family. As to quaternary structure, homodimer.

It catalyses the reaction uridine(38/39/40) in tRNA = pseudouridine(38/39/40) in tRNA. Functionally, formation of pseudouridine at positions 38, 39 and 40 in the anticodon stem and loop of transfer RNAs. The chain is tRNA pseudouridine synthase A from Neorickettsia sennetsu (strain ATCC VR-367 / Miyayama) (Ehrlichia sennetsu).